The chain runs to 197 residues: Phospholipid hydroperoxide glutathione peroxidase (197 aa).

Serine 40 is subject to Phosphoserine. Selenocysteine 73 is a catalytic residue. Selenocysteine 73 is a non-standard amino acid (selenocysteine).

The protein belongs to the glutathione peroxidase family. As to quaternary structure, monomer. Has a tendency to form higher mass oligomers. Interacts with FUNDC1; this interaction promotes GPX4 recruitment into mitochondria through TOM/TIM complex where it is degraded by mitophagy.

The protein resides in the mitochondrion. Its subcellular location is the cytoplasm. The catalysed reaction is a hydroperoxy polyunsaturated fatty acid + 2 glutathione = a hydroxy polyunsaturated fatty acid + glutathione disulfide + H2O. It catalyses the reaction 2 glutathione + H2O2 = glutathione disulfide + 2 H2O. The enzyme catalyses tert-butyl hydroperoxide + 2 glutathione = tert-butanol + glutathione disulfide + H2O. It carries out the reaction cumene hydroperoxide + 2 glutathione = 2-phenylpropan-2-ol + glutathione disulfide + H2O. The catalysed reaction is (9S)-hydroperoxy-(10E,12Z)-octadecadienoate + 2 glutathione = (9S)-hydroxy-(10E,12Z)-octadecadienoate + glutathione disulfide + H2O. It catalyses the reaction (13S)-hydroperoxy-(9Z,11E)-octadecadienoate + 2 glutathione = (13S)-hydroxy-(9Z,11E)-octadecadienoate + glutathione disulfide + H2O. The enzyme catalyses (5S)-hydroperoxy-(6E,8Z,11Z,14Z)-eicosatetraenoate + 2 glutathione = (5S)-hydroxy-(6E,8Z,11Z,14Z)-eicosatetraenoate + glutathione disulfide + H2O. It carries out the reaction (12R)-hydroperoxy-(5Z,8Z,10E,14Z)-eicosatetraenoate + 2 glutathione = (12R)-hydroxy-(5Z,8Z,10E,14Z)-eicosatetraenoate + glutathione disulfide + H2O. The catalysed reaction is (12S)-hydroperoxy-(5Z,8Z,10E,14Z)-eicosatetraenoate + 2 glutathione = (12S)-hydroxy-(5Z,8Z,10E,14Z)-eicosatetraenoate + glutathione disulfide + H2O. It catalyses the reaction (15S)-hydroperoxy-(5Z,8Z,11Z,13E)-eicosatetraenoate + 2 glutathione = (15S)-hydroxy-(5Z,8Z,11Z,13E)-eicosatetraenoate + glutathione disulfide + H2O. The enzyme catalyses (5S)-hydroperoxy-(6E,8Z,11Z,14Z,17Z)-eicosapentaenoate + 2 glutathione = (5S)-hydroxy-(6E,8Z,11Z,14Z,17Z)-eicosapentaenoate + glutathione disulfide + H2O. It carries out the reaction (12S)-hydroperoxy-(5Z,8Z,10E,14Z,17Z)-eicosapentaenoate + 2 glutathione = (12S)-hydroxy-(5Z,8Z,10E,14Z,17Z)-eicosapentaenoate + glutathione disulfide + H2O. The catalysed reaction is (15S)-hydroperoxy-(5Z,8Z,11Z,13E,17Z)-eicosapentaenoate + 2 glutathione = (15S)-hydroxy-(5Z,8Z,11Z,13E,17Z)-eicosapentaenoate + glutathione disulfide + H2O. It catalyses the reaction (15S)-hydroperoxy-(11Z,13E)-eicosadienoate + 2 glutathione = (15S)-hydroxy-(11Z,13E)-eicosadienoate + glutathione disulfide + H2O. The enzyme catalyses (17S)-hydroperoxy-(4Z,7Z,10Z,13Z,15E,19Z)-docosahexaenoate + 2 glutathione = (17S)-hydroxy-(4Z,7Z,10Z,13Z,15E,19Z)-docosahexaenoate + glutathione disulfide + H2O. It carries out the reaction a hydroperoxy-1,2-diacyl-glycero-3-phosphocholine + 2 glutathione = a hydroxy-1,2-diacyl-glycero-3-phosphocholine + glutathione disulfide + H2O. Essential antioxidant peroxidase that directly reduces phospholipid hydroperoxide even if they are incorporated in membranes and lipoproteins. Can also reduce fatty acid hydroperoxide, cholesterol hydroperoxide and thymine hydroperoxide. Plays a key role in protecting cells from oxidative damage by preventing membrane lipid peroxidation. Required to prevent cells from ferroptosis, a non-apoptotic cell death resulting from an iron-dependent accumulation of lipid reactive oxygen species. The presence of selenocysteine (Sec) versus Cys at the active site is essential for life: it provides resistance to overoxidation and prevents cells against ferroptosis. The presence of Sec at the active site is also essential for the survival of a specific type of parvalbumin-positive interneurons, thereby preventing against fatal epileptic seizures. May be required to protect cells from the toxicity of ingested lipid hydroperoxides. Required for normal sperm development and male fertility. Essential for maturation and survival of photoreceptor cells. Plays a role in a primary T-cell response to viral and parasitic infection by protecting T-cells from ferroptosis and by supporting T-cell expansion. Plays a role of glutathione peroxidase in platelets in the arachidonic acid metabolism. Reduces hydroperoxy ester lipids formed by a 15-lipoxygenase that may play a role as down-regulator of the cellular 15-lipoxygenase pathway. Can also reduce small soluble hydroperoxides such as H2O2, cumene hydroperoxide and tert-butyl hydroperoxide. This is Phospholipid hydroperoxide glutathione peroxidase from Bos taurus (Bovine).